We begin with the raw amino-acid sequence, 351 residues long: Peptide chain release factor 1 (351 aa).

Residue Q229 is modified to N5-methylglutamine.

The protein belongs to the prokaryotic/mitochondrial release factor family. Post-translationally, methylated by PrmC. Methylation increases the termination efficiency of RF1.

The protein resides in the cytoplasm. Peptide chain release factor 1 directs the termination of translation in response to the peptide chain termination codons UAG and UAA. In Cereibacter sphaeroides (strain ATCC 17023 / DSM 158 / JCM 6121 / CCUG 31486 / LMG 2827 / NBRC 12203 / NCIMB 8253 / ATH 2.4.1.) (Rhodobacter sphaeroides), this protein is Peptide chain release factor 1.